We begin with the raw amino-acid sequence, 212 residues long: MKKILLAFTLPLVLASQTAMADVTLKVPGNFEILAAQHLEIKKATKIVALPEGDQQVLVRFDSPTNPHSTGQSMGYVSSQPILIRFSANDGEVVKLVAPRVDTQQDVKRFAKNPSFELTDTAGKSVSFESEKLVVSGSPLMANYNDILAVQVAASTKQTLPQPAVITASSQSVSTVDINQLTPAQADQLMKDLYQNADKKSRKEFIRWALGL.

A signal peptide spans 1-21 (MKKILLAFTLPLVLASQTAMA).

It belongs to the UPF0319 family.

The sequence is that of UPF0319 protein PBPRA2789 from Photobacterium profundum (strain SS9).